Reading from the N-terminus, the 173-residue chain is Insertion element IS1397 uncharacterized 20.1 kDa protein (173 aa).

The tract at residues 115–135 (KSMTRSDDTHENEANMTPEEM) is disordered.

Belongs to the IS150/IS1296 orfA family.

This Escherichia coli protein is Insertion element IS1397 uncharacterized 20.1 kDa protein.